Reading from the N-terminus, the 123-residue chain is WAP four-disulfide core domain protein 5 (123 aa).

Positions 1–24 are cleaved as a signal peptide; that stretch reads MRTQSLLLLGALLAVGSQLPAVFG. 2 WAP domains span residues 27–73 and 74–121; these read KGEK…CVPR and VSVK…RDPA. 8 disulfides stabilise this stretch: cysteine 34/cysteine 62, cysteine 41/cysteine 66, cysteine 49/cysteine 61, cysteine 55/cysteine 70, cysteine 81/cysteine 109, cysteine 88/cysteine 113, cysteine 96/cysteine 108, and cysteine 102/cysteine 117.

The protein resides in the secreted. Its function is as follows. Putative acid-stable proteinase inhibitor. This is WAP four-disulfide core domain protein 5 (WFDC5) from Pan troglodytes (Chimpanzee).